The sequence spans 270 residues: HTH-type transcriptional repressor DrrR1 (270 aa).

Low complexity predominate over residues 1–11; that stretch reads MESGTSRTSDT. The disordered stretch occupies residues 1-28; the sequence is MESGTSRTSDTGGTGRAGSTETSGSGDI. The region spanning 49–109 is the HTH tetR-type domain; sequence TLTLDRVVEA…LMLDRVQRPS (61 aa). Residues 72-91 constitute a DNA-binding region (H-T-H motif); the sequence is SMRRVAAELGTGTMSLYRYV.

It localises to the cytoplasm. Daunorubicin and doxorubicin can induce dissociation of DrrR1 from its DNA complex. Ampicillin cannot release DrrR1 from the DNA complex at the same concentrations. Functionally, transcriptional regulator that modulates the expression of the drrA2-drrB2 genes, which encode an ABC transporter involved in daunorubicin efflux, in response to intracellular daunorubicin/doxorubicin accumulation. In the absence of daunorubicin or doxorubicin, binds directly to the drrA2-drrB2 promoter region and negatively regulates expression of the genes. In the presence of daunorubicin or doxorubicin, DrrR1 dissociates from DNA, leading to the transcription of the genes. In Streptomyces coeruleorubidus, this protein is HTH-type transcriptional repressor DrrR1.